We begin with the raw amino-acid sequence, 91 residues long: Proline, histidine and glycine-rich protein 1 (91 aa).

The disordered stretch occupies residues 1-91 (MHPGGKGHCG…HCGPHPGPHH (91 aa)). Gly residues-rich tracts occupy residues 33–42 (HPGHGPGHCP), 49–63 (GHGG…GHCP), and 70–82 (GHGG…GPGH).

The polypeptide is Proline, histidine and glycine-rich protein 1 (Phgr1) (Mus musculus (Mouse)).